A 358-amino-acid chain; its full sequence is Alanine racemase (358 aa).

Lysine 35 (proton acceptor; specific for D-alanine) is an active-site residue. The residue at position 35 (lysine 35) is an N6-(pyridoxal phosphate)lysine. A substrate-binding site is contributed by arginine 130. Residue tyrosine 255 is the Proton acceptor; specific for L-alanine of the active site. A substrate-binding site is contributed by methionine 303.

Belongs to the alanine racemase family. The cofactor is pyridoxal 5'-phosphate.

The catalysed reaction is L-alanine = D-alanine. It participates in amino-acid biosynthesis; D-alanine biosynthesis; D-alanine from L-alanine: step 1/1. Catalyzes the interconversion of L-alanine and D-alanine. May also act on other amino acids. This Shewanella piezotolerans (strain WP3 / JCM 13877) protein is Alanine racemase (alr).